Consider the following 92-residue polypeptide: DNA-directed RNA polymerase subunit omega (92 aa).

The protein belongs to the RNA polymerase subunit omega family. The RNAP catalytic core consists of 2 alpha, 1 beta, 1 beta' and 1 omega subunit. When a sigma factor is associated with the core the holoenzyme is formed, which can initiate transcription.

It catalyses the reaction RNA(n) + a ribonucleoside 5'-triphosphate = RNA(n+1) + diphosphate. In terms of biological role, promotes RNA polymerase assembly. Latches the N- and C-terminal regions of the beta' subunit thereby facilitating its interaction with the beta and alpha subunits. The sequence is that of DNA-directed RNA polymerase subunit omega from Shewanella denitrificans (strain OS217 / ATCC BAA-1090 / DSM 15013).